The sequence spans 71 residues: UPF0346 protein SMU_1621c (71 aa).

Belongs to the UPF0346 family.

The protein is UPF0346 protein SMU_1621c of Streptococcus mutans serotype c (strain ATCC 700610 / UA159).